A 285-amino-acid polypeptide reads, in one-letter code: Bifunctional protein FolD (285 aa).

Residues 166–168 (GAS) and isoleucine 232 contribute to the NADP(+) site.

It belongs to the tetrahydrofolate dehydrogenase/cyclohydrolase family. As to quaternary structure, homodimer.

The catalysed reaction is (6R)-5,10-methylene-5,6,7,8-tetrahydrofolate + NADP(+) = (6R)-5,10-methenyltetrahydrofolate + NADPH. The enzyme catalyses (6R)-5,10-methenyltetrahydrofolate + H2O = (6R)-10-formyltetrahydrofolate + H(+). It functions in the pathway one-carbon metabolism; tetrahydrofolate interconversion. Its function is as follows. Catalyzes the oxidation of 5,10-methylenetetrahydrofolate to 5,10-methenyltetrahydrofolate and then the hydrolysis of 5,10-methenyltetrahydrofolate to 10-formyltetrahydrofolate. The sequence is that of Bifunctional protein FolD from Aliivibrio fischeri (strain MJ11) (Vibrio fischeri).